The sequence spans 79 residues: D-alanyl carrier protein (79 aa).

Residues 1 to 77 form the Carrier domain; that stretch reads MSIEETVIEL…KIVQGVEELQ (77 aa). Ser35 carries the post-translational modification O-(pantetheine 4'-phosphoryl)serine.

It belongs to the DltC family. 4'-phosphopantetheine is transferred from CoA to a specific serine of apo-DCP.

Its subcellular location is the cytoplasm. Its pathway is cell wall biogenesis; lipoteichoic acid biosynthesis. Functionally, carrier protein involved in the D-alanylation of lipoteichoic acid (LTA). The loading of thioester-linked D-alanine onto DltC is catalyzed by D-alanine--D-alanyl carrier protein ligase DltA. The DltC-carried D-alanyl group is further transferred to cell membrane phosphatidylglycerol (PG) by forming an ester bond, probably catalyzed by DltD. D-alanylation of LTA plays an important role in modulating the properties of the cell wall in Gram-positive bacteria, influencing the net charge of the cell wall. The polypeptide is D-alanyl carrier protein (Streptococcus pyogenes serotype M1).